A 75-amino-acid chain; its full sequence is Small ribosomal subunit protein bS18 (75 aa).

Belongs to the bacterial ribosomal protein bS18 family. In terms of assembly, part of the 30S ribosomal subunit. Forms a tight heterodimer with protein bS6.

Its function is as follows. Binds as a heterodimer with protein bS6 to the central domain of the 16S rRNA, where it helps stabilize the platform of the 30S subunit. This is Small ribosomal subunit protein bS18 from Klebsiella pneumoniae (strain 342).